Here is a 240-residue protein sequence, read N- to C-terminus: tRNA (guanine-N(7)-)-methyltransferase (240 aa).

Positions 1 to 20 (MTESHDTPITPDGEARPHRR) are disordered. S-adenosyl-L-methionine contacts are provided by Glu70, Glu95, Asp122, and Asp145. Residue Asp145 is part of the active site. Substrate is bound by residues Lys149, Asp181, and 218–221 (TKFE).

It belongs to the class I-like SAM-binding methyltransferase superfamily. TrmB family.

The catalysed reaction is guanosine(46) in tRNA + S-adenosyl-L-methionine = N(7)-methylguanosine(46) in tRNA + S-adenosyl-L-homocysteine. Its pathway is tRNA modification; N(7)-methylguanine-tRNA biosynthesis. In terms of biological role, catalyzes the formation of N(7)-methylguanine at position 46 (m7G46) in tRNA. The polypeptide is tRNA (guanine-N(7)-)-methyltransferase (Pseudomonas putida (strain ATCC 47054 / DSM 6125 / CFBP 8728 / NCIMB 11950 / KT2440)).